We begin with the raw amino-acid sequence, 36 residues long: Serum amyloid P-component (36 aa).

Positions 6–36 constitute a Pentraxin (PTX) domain; the sequence is SGKVFVIPMATSTSHVKLHARVSEPISAMTM.

Belongs to the pentraxin family. In terms of assembly, homopentamer. Discoid arrangement of 5 covalently bound subunits. Requires Ca(2+) as cofactor.

The protein localises to the secreted. The sequence is that of Serum amyloid P-component from Salmo salar (Atlantic salmon).